A 71-amino-acid polypeptide reads, in one-letter code: Vitellogenin-B1 (71 aa).

Residues 1–15 (MRGIILAQLLALAGS) form the signal peptide. Residues 24–71 (FSESKPYVYNYEGIILNGIPENGLARSGIKLNCKAEISGYAQRSYMLK) form the Vitellogenin domain.

In terms of tissue distribution, produced by the liver, secreted into the blood and then sequestered by receptor mediated endocytosis into growing oocytes, where it is generally cleaved, giving rise to the respective yolk components.

Precursor of the major egg-yolk proteins that are sources of nutrients during early development of oviparous organisms. The chain is Vitellogenin-B1 from Xenopus laevis (African clawed frog).